The following is a 258-amino-acid chain: Methanol--corrinoid protein (258 aa).

The B12-binding N-terminal domain maps to 30-124 (AEELYPKDEL…NSGATPKTKG (95 aa)). The B12-binding domain occupies 123-248 (KGTVVCHVAE…DAIIAGTTDV (126 aa)). Residue His136 participates in methylcob(III)alamin binding.

This sequence belongs to the methylamine corrinoid protein family. In terms of assembly, heterotetramer, composed of 2 MtaB and 2 MtaC subunits.

Harbors a corrinoid prosthetic group and acts as a methyl group carrier in methanogenesis in the methanol pathway. The methyl group of methanol is first transferred to the corrinoid prosthetic group of MtaC in the cob(I)amide oxidation state. This reaction is mediated by MtaB. The methyl group from MtaC is then transferred to coenzyme M by MtaA. This Methanosarcina barkeri (strain Fusaro / DSM 804) protein is Methanol--corrinoid protein (mtaC).